A 359-amino-acid polypeptide reads, in one-letter code: Queuine tRNA-ribosyltransferase (359 aa).

The active-site Proton acceptor is Asp-92. Residues 92 to 96 (DSGGF), Asp-146, Gln-189, and Gly-216 each bind substrate. The RNA binding stretch occupies residues 245 to 251 (GVGKPAD). The Nucleophile role is filled by Asp-264. An RNA binding; important for wobble base 34 recognition region spans residues 269–273 (TRSGR). The Zn(2+) site is built by Cys-302, Cys-304, Cys-307, and His-333.

Belongs to the queuine tRNA-ribosyltransferase family. As to quaternary structure, homodimer. Within each dimer, one monomer is responsible for RNA recognition and catalysis, while the other monomer binds to the replacement base PreQ1. Requires Zn(2+) as cofactor.

The enzyme catalyses 7-aminomethyl-7-carbaguanine + guanosine(34) in tRNA = 7-aminomethyl-7-carbaguanosine(34) in tRNA + guanine. The protein operates within tRNA modification; tRNA-queuosine biosynthesis. Its function is as follows. Catalyzes the base-exchange of a guanine (G) residue with the queuine precursor 7-aminomethyl-7-deazaguanine (PreQ1) at position 34 (anticodon wobble position) in tRNAs with GU(N) anticodons (tRNA-Asp, -Asn, -His and -Tyr). Catalysis occurs through a double-displacement mechanism. The nucleophile active site attacks the C1' of nucleotide 34 to detach the guanine base from the RNA, forming a covalent enzyme-RNA intermediate. The proton acceptor active site deprotonates the incoming PreQ1, allowing a nucleophilic attack on the C1' of the ribose to form the product. After dissociation, two additional enzymatic reactions on the tRNA convert PreQ1 to queuine (Q), resulting in the hypermodified nucleoside queuosine (7-(((4,5-cis-dihydroxy-2-cyclopenten-1-yl)amino)methyl)-7-deazaguanosine). The polypeptide is Queuine tRNA-ribosyltransferase (Rickettsia bellii (strain RML369-C)).